The following is a 297-amino-acid chain: Glycerol-3-phosphate dehydrogenase [NAD(P)+] (297 aa).

3 residues coordinate NADPH: W11, R33, and K79. Sn-glycerol 3-phosphate-binding residues include K79, G107, and S109. A111 contributes to the NADPH binding site. 5 residues coordinate sn-glycerol 3-phosphate: K161, D214, S224, R225, and N226. K161 acts as the Proton acceptor in catalysis. Residue R225 participates in NADPH binding. NADPH is bound by residues V249 and E251.

Belongs to the NAD-dependent glycerol-3-phosphate dehydrogenase family.

The protein resides in the cytoplasm. The enzyme catalyses sn-glycerol 3-phosphate + NAD(+) = dihydroxyacetone phosphate + NADH + H(+). The catalysed reaction is sn-glycerol 3-phosphate + NADP(+) = dihydroxyacetone phosphate + NADPH + H(+). The protein operates within membrane lipid metabolism; glycerophospholipid metabolism. Its function is as follows. Catalyzes the reduction of the glycolytic intermediate dihydroxyacetone phosphate (DHAP) to sn-glycerol 3-phosphate (G3P), the key precursor for phospholipid synthesis. The chain is Glycerol-3-phosphate dehydrogenase [NAD(P)+] from Campylobacter jejuni subsp. jejuni serotype O:23/36 (strain 81-176).